The following is a 568-amino-acid chain: Type 2 DNA topoisomerase 6 subunit B (568 aa).

ATP contacts are provided by residues Asn-46, Asp-78, 99 to 100, 109 to 116, and Lys-473; these read TK and GQQGIGIS.

This sequence belongs to the TOP6B family. In terms of assembly, homodimer. Heterotetramer of two Top6A and two Top6B chains.

The enzyme catalyses ATP-dependent breakage, passage and rejoining of double-stranded DNA.. Relaxes both positive and negative superturns and exhibits a strong decatenase activity. The chain is Type 2 DNA topoisomerase 6 subunit B from Pyrococcus furiosus (strain ATCC 43587 / DSM 3638 / JCM 8422 / Vc1).